We begin with the raw amino-acid sequence, 200 residues long: Recombination protein RecR (200 aa).

The C4-type zinc-finger motif lies at 58–73; that stretch reads CSLCCNLTDEDPCSIC. Positions 81–176 constitute a Toprim domain; that stretch reads NLLCVVEEPR…KVTRIAHGIP (96 aa).

It belongs to the RecR family.

In terms of biological role, may play a role in DNA repair. It seems to be involved in an RecBC-independent recombinational process of DNA repair. It may act with RecF and RecO. The polypeptide is Recombination protein RecR (Desulforamulus reducens (strain ATCC BAA-1160 / DSM 100696 / MI-1) (Desulfotomaculum reducens)).